The chain runs to 137 residues: Putative transcriptional regulatory protein MJ0173 (137 aa).

This sequence belongs to the Tfx family.

Its function is as follows. Putative transcriptional regulator. The sequence is that of Putative transcriptional regulatory protein MJ0173 from Methanocaldococcus jannaschii (strain ATCC 43067 / DSM 2661 / JAL-1 / JCM 10045 / NBRC 100440) (Methanococcus jannaschii).